A 314-amino-acid chain; its full sequence is Serine/threonine-protein phosphatase PP-Y (314 aa).

D60, H62, D88, and N120 together coordinate Mn(2+). H121 serves as the catalytic Proton donor. Positions 169 and 244 each coordinate Mn(2+).

This sequence belongs to the PPP phosphatase family. PP-Y subfamily. Mn(2+) serves as cofactor.

It carries out the reaction O-phospho-L-seryl-[protein] + H2O = L-seryl-[protein] + phosphate. It catalyses the reaction O-phospho-L-threonyl-[protein] + H2O = L-threonyl-[protein] + phosphate. The protein is Serine/threonine-protein phosphatase PP-Y (PpY-55A) of Drosophila melanogaster (Fruit fly).